Consider the following 67-residue polypeptide: ATP synthase F(0) complex subunit 8 (67 aa).

The chain crosses the membrane as a helical span at residues 8–24; sequence TWFITIVSMLLSLFILM. Residue Lys-54 is modified to N6-acetyllysine; alternate. Lys-54 carries the post-translational modification N6-succinyllysine; alternate. N6-acetyllysine is present on Lys-57.

Belongs to the ATPase protein 8 family. Component of the ATP synthase complex composed at least of ATP5F1A/subunit alpha, ATP5F1B/subunit beta, ATP5MC1/subunit c (homooctomer), MT-ATP6/subunit a, MT-ATP8/subunit 8, ATP5ME/subunit e, ATP5MF/subunit f, ATP5MG/subunit g, ATP5MK/subunit k, ATP5MJ/subunit j, ATP5F1C/subunit gamma, ATP5F1D/subunit delta, ATP5F1E/subunit epsilon, ATP5PF/subunit F6, ATP5PB/subunit b, ATP5PD/subunit d, ATP5PO/subunit OSCP. ATP synthase complex consists of a soluble F(1) head domain (subunits alpha(3) and beta(3)) - the catalytic core - and a membrane F(0) domain - the membrane proton channel (subunits c, a, 8, e, f, g, k and j). These two domains are linked by a central stalk (subunits gamma, delta, and epsilon) rotating inside the F1 region and a stationary peripheral stalk (subunits F6, b, d, and OSCP). Interacts with PRICKLE3.

Its subcellular location is the mitochondrion membrane. Its function is as follows. Subunit 8, of the mitochondrial membrane ATP synthase complex (F(1)F(0) ATP synthase or Complex V) that produces ATP from ADP in the presence of a proton gradient across the membrane which is generated by electron transport complexes of the respiratory chain. ATP synthase complex consist of a soluble F(1) head domain - the catalytic core - and a membrane F(1) domain - the membrane proton channel. These two domains are linked by a central stalk rotating inside the F(1) region and a stationary peripheral stalk. During catalysis, ATP synthesis in the catalytic domain of F(1) is coupled via a rotary mechanism of the central stalk subunits to proton translocation. In vivo, can only synthesize ATP although its ATP hydrolase activity can be activated artificially in vitro. Part of the complex F(0) domain. This chain is ATP synthase F(0) complex subunit 8, found in Dasypus novemcinctus (Nine-banded armadillo).